Here is a 270-residue protein sequence, read N- to C-terminus: MATYIMGDLHGCFTEFQQLLDKISYNPNYDELWLTGDIVARGEHSLACLRFIKDPKNNIKTVLGNHDLHLLATLVGIKKVKPTDKLEALFSAPDRLELQHWLRKQPLMVQHPTHNFLLVHAGISPEWDLSTTLSCAREAEMILQSDNYADYLAEMYDNTPDQWQDNLTGIARWRYILNAFTRMRFCYADKRLDFSCKLPIEKAPVTLKPWLELDNPLYDTHDILFGHWASLMGKTSRSNIYALDTGCVWGNHLTIINWETKQIFRQERLK.

It belongs to the Ap4A hydrolase family.

It carries out the reaction P(1),P(4)-bis(5'-adenosyl) tetraphosphate + H2O = 2 ADP + 2 H(+). Functionally, hydrolyzes diadenosine 5',5'''-P1,P4-tetraphosphate to yield ADP. The polypeptide is Bis(5'-nucleosyl)-tetraphosphatase, symmetrical (Haemophilus ducreyi (strain 35000HP / ATCC 700724)).